The following is a 309-amino-acid chain: Succinate--CoA ligase [ADP-forming] subunit alpha-2, mitochondrial (309 aa).

The N-terminal 9 residues, 1-9, are a transit peptide targeting the hydrogenosome; the sequence is MLSSSFERN. Residues lysine 54 and 107–109 each bind CoA; that span reads ITE. Position 171 (tyrosine 171) interacts with substrate. The active-site Tele-phosphohistidine intermediate is histidine 262.

Belongs to the succinate/malate CoA ligase alpha subunit family. In terms of assembly, heterodimer of an alpha and a beta subunit.

It is found in the hydrogenosome lumen. It catalyses the reaction succinate + ATP + CoA = succinyl-CoA + ADP + phosphate. The protein operates within carbohydrate metabolism; tricarboxylic acid cycle; succinate from succinyl-CoA (ligase route): step 1/1. Succinyl-CoA synthetase functions in the citric acid cycle (TCA), coupling the hydrolysis of succinyl-CoA to the synthesis of ATP and thus represents the only step of substrate-level phosphorylation in the TCA. The alpha subunit of the enzyme binds the substrates coenzyme A and phosphate, while succinate binding and nucleotide specificity is provided by the beta subunit. In Trichomonas vaginalis, this protein is Succinate--CoA ligase [ADP-forming] subunit alpha-2, mitochondrial (ALPHA-SCS2).